The following is a 273-amino-acid chain: Putative phosphoenolpyruvate synthase regulatory protein (273 aa).

Residue 153 to 160 coordinates ADP; the sequence is GVSRCGKT.

The protein belongs to the pyruvate, phosphate/water dikinase regulatory protein family. PSRP subfamily.

It carries out the reaction [pyruvate, water dikinase] + ADP = [pyruvate, water dikinase]-phosphate + AMP + H(+). The enzyme catalyses [pyruvate, water dikinase]-phosphate + phosphate + H(+) = [pyruvate, water dikinase] + diphosphate. Functionally, bifunctional serine/threonine kinase and phosphorylase involved in the regulation of the phosphoenolpyruvate synthase (PEPS) by catalyzing its phosphorylation/dephosphorylation. The chain is Putative phosphoenolpyruvate synthase regulatory protein from Pectobacterium atrosepticum (strain SCRI 1043 / ATCC BAA-672) (Erwinia carotovora subsp. atroseptica).